The primary structure comprises 186 residues: Elongation factor P (186 aa).

Belongs to the elongation factor P family.

It is found in the cytoplasm. The protein operates within protein biosynthesis; polypeptide chain elongation. In terms of biological role, involved in peptide bond synthesis. Stimulates efficient translation and peptide-bond synthesis on native or reconstituted 70S ribosomes in vitro. Probably functions indirectly by altering the affinity of the ribosome for aminoacyl-tRNA, thus increasing their reactivity as acceptors for peptidyl transferase. In Crocosphaera subtropica (strain ATCC 51142 / BH68) (Cyanothece sp. (strain ATCC 51142)), this protein is Elongation factor P.